The primary structure comprises 542 residues: Chaperonin GroEL (542 aa).

ATP contacts are provided by residues 29–32 (TLGP), 86–90 (DGTTT), Gly-413, and Asp-493.

This sequence belongs to the chaperonin (HSP60) family. As to quaternary structure, forms a cylinder of 14 subunits composed of two heptameric rings stacked back-to-back. Interacts with the co-chaperonin GroES.

It localises to the cytoplasm. It catalyses the reaction ATP + H2O + a folded polypeptide = ADP + phosphate + an unfolded polypeptide.. Together with its co-chaperonin GroES, plays an essential role in assisting protein folding. The GroEL-GroES system forms a nano-cage that allows encapsulation of the non-native substrate proteins and provides a physical environment optimized to promote and accelerate protein folding. The chain is Chaperonin GroEL from Elusimicrobium minutum (strain Pei191).